A 600-amino-acid polypeptide reads, in one-letter code: Pyranose dehydrogenase 2 (600 aa).

Residues 1–25 (MLSRVAKLNSRLVSLALLGSQIAFG) form the signal peptide. N-linked (GlcNAc...) asparagine glycosylation is found at Asn-99 and Asn-114. The residue at position 127 (His-127) is a Tele-8alpha-FAD histidine. 3 N-linked (GlcNAc...) asparagine glycosylation sites follow: Asn-199, Asn-275, and Asn-342. The active-site Proton acceptor is the His-535. Residue His-579 is part of the active site.

The protein belongs to the GMC oxidoreductase family. Monomer. FAD is required as a cofactor. N-glycosylated.

The protein localises to the secreted. It carries out the reaction pyranose + acceptor = pyranos-2-ulose + reduced acceptor.. It catalyses the reaction pyranose + acceptor = pyranos-3-ulose + reduced acceptor.. The enzyme catalyses pyranose + acceptor = pyranos-2,3-diulose + reduced acceptor.. The catalysed reaction is a pyranoside + acceptor = a pyranosid-3-ulose + reduced acceptor.. It carries out the reaction a pyranoside + acceptor = a pyranosid-3,4-diulose + reduced acceptor.. In terms of biological role, catalyzes the single-oxidation or sequential double oxidation reaction of carbohydrates primarily at carbon-2 and/or carbon-3 with the concomitant reduction of the flavin. The enzyme exhibits a broad sugar substrate specificity, oxidizing different aldopyranoses to the corresponding C-1, C-2, C-3 or C-1,2, C-2,3 and C-3,4 (di)dehydro sugars with substrate-specific regioselectivity. Accepts only a narrow range of electron acceptors such as substituted benzoquinones and complexed metal ions and reacts extremely slowly with O(2) as acceptor. May play a role in the natural recycling of plant matter by oxidizing all major monosaccharides in lignocellulose and by reducing quinone compounds or reactive radical species generated during lignin depolymerization. In Leucoagaricus meleagris (Western flat-topped agaric), this protein is Pyranose dehydrogenase 2.